Here is a 509-residue protein sequence, read N- to C-terminus: MTRLSLQLIAGLAGQAWLVNSDTPSHEAFASCLSDASVPIATKGTPEWTQHTTPFNTRLQYEPIAVAVPTEISQIAAAVTCAKKNSIPVTAKSGGHSFTSLGLGGEDGHLVIQLDRMYNVELAQNGTARIQSGARLGHVAVELYNQGKRALSHGYCPAVGVGGHAAHGGYGMVSRKYGLTLDWMKDATVVLHNGTIVYCSESEHSDLFWAIRGAGSSFGIVAEYGFETFPAPEKVTNFGIVLDWNPETAPAGLLAFQDFAQTMPSELSCQIDVRSTGYTLNGSYVGNEASLREALVPLLGKIGGHLEVHEGNWLEYVKFWAFGQPNIDITPPADNVHLSLYTTGALTPSLSANQFKSFADYIAKDAIKRGNSWSIQMFIHGGQNSAISGPKITDTAYAHRDKFLIFQFTDFVWPSQEYPEDGLALGREFRDIITNSFTNDQWGMYANVPDSQLSSGEAQKLYWGKNLERLETIKAKYDPSNLFRNPQSVKAAARCATHPLLLQGQCLLF.

An N-terminal signal peptide occupies residues 1–21; the sequence is MTRLSLQLIAGLAGQAWLVNS. The 173-residue stretch at 59–231 folds into the FAD-binding PCMH-type domain; sequence LQYEPIAVAV…AEYGFETFPA (173 aa). 3 N-linked (GlcNAc...) asparagine glycosylation sites follow: N125, N193, and N281.

This sequence belongs to the oxygen-dependent FAD-linked oxidoreductase family. FAD is required as a cofactor.

It functions in the pathway secondary metabolite biosynthesis; terpenoid biosynthesis. Functionally, FAD-linked oxidoreductase; part of the gene cluster that mediates the biosynthesis of the diterpenoid pyrones subglutinols A and B. The first step of the pathway is the synthesis of the alpha-pyrone moiety by the polyketide synthase dpmaA via condensation of one acetyl-CoA starter unit with 3 malonyl-CoA units and 2 methylations. The alpha-pyrone is then combined with geranylgeranyl pyrophosphate (GGPP) formed by the GGPP synthase dpmaD through the action of the prenyltransferase dpmaC to yield a linear alpha-pyrone diterpenoid. Subsequent steps in the diterpenoid pyrone biosynthetic pathway involve the decalin core formation, which is initiated by the epoxidation of the C10-C11 olefin by the FAD-dependent oxidoreductase dpmaE, and is followed by a cyclization cascade catalyzed by the terpene cyclase dpmaB. The dehydrogenase dpmaF is then involved in tetrahydrofuran (THF) ring formation at the C5 unit to complete the formation of subglutinols A and B. This chain is FAD-linked oxidoreductase dpmaF, found in Metarhizium anisopliae (Entomophthora anisopliae).